Here is a 514-residue protein sequence, read N- to C-terminus: Putative binding protein HI_0213 (514 aa).

The N-terminal stretch at 1 to 23 (MNNLFALCQRSAVIFSIIFTVVA) is a signal peptide. A lipid anchor (N-palmitoyl cysteine) is attached at Cys-24. Cys-24 carries the S-diacylglycerol cysteine lipid modification.

This sequence belongs to the bacterial solute-binding protein 5 family.

The protein resides in the cell membrane. Functionally, part of a binding-protein-dependent transport system. The chain is Putative binding protein HI_0213 from Haemophilus influenzae (strain ATCC 51907 / DSM 11121 / KW20 / Rd).